We begin with the raw amino-acid sequence, 316 residues long: 4-hydroxy-3-methylbut-2-enyl diphosphate reductase (316 aa).

Cys-12 serves as a coordination point for [4Fe-4S] cluster. (2E)-4-hydroxy-3-methylbut-2-enyl diphosphate-binding residues include His-41 and His-74. Positions 41 and 74 each coordinate dimethylallyl diphosphate. Isopentenyl diphosphate contacts are provided by His-41 and His-74. Residue Cys-96 participates in [4Fe-4S] cluster binding. His-124 is a binding site for (2E)-4-hydroxy-3-methylbut-2-enyl diphosphate. His-124 is a binding site for dimethylallyl diphosphate. Residue His-124 coordinates isopentenyl diphosphate. Glu-126 acts as the Proton donor in catalysis. Thr-169 serves as a coordination point for (2E)-4-hydroxy-3-methylbut-2-enyl diphosphate. A [4Fe-4S] cluster-binding site is contributed by Cys-199. The (2E)-4-hydroxy-3-methylbut-2-enyl diphosphate site is built by Ser-227, Ser-228, Asn-229, and Ser-271. Residues Ser-227, Ser-228, Asn-229, and Ser-271 each coordinate dimethylallyl diphosphate. Positions 227, 228, 229, and 271 each coordinate isopentenyl diphosphate.

This sequence belongs to the IspH family. It depends on [4Fe-4S] cluster as a cofactor.

The enzyme catalyses isopentenyl diphosphate + 2 oxidized [2Fe-2S]-[ferredoxin] + H2O = (2E)-4-hydroxy-3-methylbut-2-enyl diphosphate + 2 reduced [2Fe-2S]-[ferredoxin] + 2 H(+). It carries out the reaction dimethylallyl diphosphate + 2 oxidized [2Fe-2S]-[ferredoxin] + H2O = (2E)-4-hydroxy-3-methylbut-2-enyl diphosphate + 2 reduced [2Fe-2S]-[ferredoxin] + 2 H(+). It functions in the pathway isoprenoid biosynthesis; dimethylallyl diphosphate biosynthesis; dimethylallyl diphosphate from (2E)-4-hydroxy-3-methylbutenyl diphosphate: step 1/1. The protein operates within isoprenoid biosynthesis; isopentenyl diphosphate biosynthesis via DXP pathway; isopentenyl diphosphate from 1-deoxy-D-xylulose 5-phosphate: step 6/6. Its function is as follows. Catalyzes the conversion of 1-hydroxy-2-methyl-2-(E)-butenyl 4-diphosphate (HMBPP) into a mixture of isopentenyl diphosphate (IPP) and dimethylallyl diphosphate (DMAPP). Acts in the terminal step of the DOXP/MEP pathway for isoprenoid precursor biosynthesis. In Xylella fastidiosa (strain M12), this protein is 4-hydroxy-3-methylbut-2-enyl diphosphate reductase.